Here is a 293-residue protein sequence, read N- to C-terminus: ATP synthase gamma chain (293 aa).

Belongs to the ATPase gamma chain family. In terms of assembly, F-type ATPases have 2 components, CF(1) - the catalytic core - and CF(0) - the membrane proton channel. CF(1) has five subunits: alpha(3), beta(3), gamma(1), delta(1), epsilon(1). CF(0) has three main subunits: a, b and c.

It is found in the cell inner membrane. In terms of biological role, produces ATP from ADP in the presence of a proton gradient across the membrane. The gamma chain is believed to be important in regulating ATPase activity and the flow of protons through the CF(0) complex. This is ATP synthase gamma chain from Psychrobacter sp. (strain PRwf-1).